The primary structure comprises 393 residues: Probable galacturonosyltransferase-like 8 (393 aa).

Over 1–4 (MSSR) the chain is Cytoplasmic. A helical; Signal-anchor for type II membrane protein transmembrane segment spans residues 5-25 (FSLTVVCLIALLPFVVGIRLI). The Lumenal segment spans residues 26 to 393 (PARITSVGDG…SELTDDSSFL (368 aa)). Residue N226 is glycosylated (N-linked (GlcNAc...) asparagine).

This sequence belongs to the glycosyltransferase 8 family.

Its subcellular location is the golgi apparatus membrane. It functions in the pathway glycan metabolism; pectin biosynthesis. In terms of biological role, may be involved in pectin and/or xylans biosynthesis in cell walls. This Arabidopsis thaliana (Mouse-ear cress) protein is Probable galacturonosyltransferase-like 8 (GATL8).